The chain runs to 387 residues: MLHTTPSGLLIIDKPQGVTSFDAVAAVRGALHIKKVGHAGTLDPMATGTLVIAFGHATRLLNAIVAHDKTYEATIRLGLRTTTDDAEGEVLVDDEARSRWQTLSAQLTEGGQSGEPTALPTASWQDLLTRTIATNFTGDIEQVPNTFSAIKINGQRAYDLAREGKDVELKPRPVTISEFTVLDIRSGFVAGEQTAEPLREDANTGAIPALDVDVRISCSSGTYIRALARDLGKELGVGGYLTRLRRTRVGRFALPDDASGLIAPEAMLDTRTHTVTAHTDQKTFTNREGQTVTRNKCVLDTPEGLAGDERRNWLLDHALTMEQAARGAMPALDITPEEASELRFGRRIERTISEPTAAIVPQTHDVAAIIERANAHQAKPVTVFPLA.

The active-site Nucleophile is Asp43.

It belongs to the pseudouridine synthase TruB family. Type 1 subfamily.

The enzyme catalyses uridine(55) in tRNA = pseudouridine(55) in tRNA. Functionally, responsible for synthesis of pseudouridine from uracil-55 in the psi GC loop of transfer RNAs. The polypeptide is tRNA pseudouridine synthase B (Bifidobacterium longum (strain DJO10A)).